A 249-amino-acid chain; its full sequence is Small ribosomal subunit protein uS3 (249 aa).

The KH type-2 domain occupies 39–109 (IRTYVLARLK…EVKIDVVEVV (71 aa)). A compositionally biased stretch (basic and acidic residues) spans 226-239 (KERRNDAGARNRDS). Residues 226–249 (KERRNDAGARNRDSRTKRRHRTKR) form a disordered region. Residues 240–249 (RTKRRHRTKR) are compositionally biased toward basic residues.

The protein belongs to the universal ribosomal protein uS3 family. In terms of assembly, part of the 30S ribosomal subunit. Forms a tight complex with proteins S10 and S14.

Functionally, binds the lower part of the 30S subunit head. Binds mRNA in the 70S ribosome, positioning it for translation. In Pelodictyon phaeoclathratiforme (strain DSM 5477 / BU-1), this protein is Small ribosomal subunit protein uS3.